A 151-amino-acid polypeptide reads, in one-letter code: Large ribosomal subunit protein bL9 (151 aa).

Belongs to the bacterial ribosomal protein bL9 family.

Binds to the 23S rRNA. In Acidobacterium capsulatum (strain ATCC 51196 / DSM 11244 / BCRC 80197 / JCM 7670 / NBRC 15755 / NCIMB 13165 / 161), this protein is Large ribosomal subunit protein bL9.